The sequence spans 828 residues: MKLSRRSFMKANAVAAAAAAAGLSVPGVARAVVGQQEAIKWDKAPCRFCGTGCGVLVGTQQGRIVACQGDPDAPVNRGLNCIKGYFLPKIMYGKDRLTQPMLRMKDGQYNKEGEFTPISWDQAFDVMEEKFKASLKEKGPEAIGMFGSGQWTVWEGYAAAKLFKAGFRSNNIDPNARHCMASAVVGFMRTFGMDEPMGCYDDIEQADAFVLWGSNMAEMHPILWSRITNRRLSDPNVNVAVLSTFQHRSFELADNGIVFTPQSDLVILNYIANYIIQNNAINQDFFSKYVNLRKGTTDIGYGLRPTHPLEKAAKNPGSDASEPMSFDEYKAFVAEYTLEKTAEMTGVPKDQLEQLAQLYADPKKKVISYWTMGFNQHTRGVWANNLVYNLHLLTGKISQPGCGPFSLTGQPSACGTAREVGTFSHRLPADMVVTNEKHRDICEKHWQIPTGTIPAKIGLHAVAQDRALKDGKLNVYWVMCNNNMQAGPNINEERMPGWRDPRNFVIVSDPYPTVSALAADLILPTAMWVEKEGAYGNAERRTQFWRQQIKAPGEAKSDLWQLVQFARRFKTEEVWPEDLLAQKPELRGKTLYDVLFATPAVSKFPLTDLAEDQLNDESRELGFYLQKGLFEEYAWFGRGHGHDLAPFDDYHKARGLRWPVVDGKETQWRYSEGHDPYVKAGEGYKFYGKPDGKAVIFALPFEPAAEAPDKEYDLWLSTGRVLEHWHTGSMTRRVPELHRAFPEAVLFIHPLDAKTRDLRRGDKVKVISRRGEVISVVETRGRNRPPQGLVYMPFFDAAQLVNNLTLDATDPLSKETDFKKCAVKLAKV.

A signal peptide (tat-type signal) is located at residues 1–31 (MKLSRRSFMKANAVAAAAAAAGLSVPGVARA). Residues 39–95 (IKWDKAPCRFCGTGCGVLVGTQQGRIVACQGDPDAPVNRGLNCIKGYFLPKIMYGKD) form the 4Fe-4S Mo/W bis-MGD-type domain. [4Fe-4S] cluster is bound by residues Cys-46, Cys-49, Cys-53, and Cys-81. Mo-bis(molybdopterin guanine dinucleotide) is bound by residues Lys-83, Gln-150, Asn-175, Cys-179, 212-219 (WGSNMAEM), 243-247 (STFQH), 262-264 (QSD), Met-372, Gln-376, Asn-482, 508-509 (SD), Lys-531, Asp-558, and 718-727 (TGRVLEHWHT). Residue Phe-794 participates in substrate binding. 2 residues coordinate Mo-bis(molybdopterin guanine dinucleotide): Asn-802 and Lys-819.

Belongs to the prokaryotic molybdopterin-containing oxidoreductase family. NasA/NapA/NarB subfamily. Component of the periplasmic nitrate reductase NapAB complex composed of NapA and NapB. [4Fe-4S] cluster is required as a cofactor. Requires Mo-bis(molybdopterin guanine dinucleotide) as cofactor. Predicted to be exported by the Tat system. The position of the signal peptide cleavage has not been experimentally proven.

The protein localises to the periplasm. The catalysed reaction is 2 Fe(II)-[cytochrome] + nitrate + 2 H(+) = 2 Fe(III)-[cytochrome] + nitrite + H2O. Catalytic subunit of the periplasmic nitrate reductase complex NapAB. Receives electrons from NapB and catalyzes the reduction of nitrate to nitrite. This is Periplasmic nitrate reductase from Citrobacter koseri (strain ATCC BAA-895 / CDC 4225-83 / SGSC4696).